Consider the following 901-residue polypeptide: Protein translocase subunit SecA (901 aa).

ATP contacts are provided by residues Gln87, 105-109 (GEGKT), and Asp512. A disordered region spans residues 852-901 (AQMQQLSHQSDDEAAAQDLAAQTGERKVGRNDPCPCGSGKKYKQCHGRLS). Residues Cys885, Cys887, Cys896, and His897 each coordinate Zn(2+). A compositionally biased stretch (basic residues) spans 891-901 (KKYKQCHGRLS).

Belongs to the SecA family. Monomer and homodimer. Part of the essential Sec protein translocation apparatus which comprises SecA, SecYEG and auxiliary proteins SecDF-YajC and YidC. It depends on Zn(2+) as a cofactor.

Its subcellular location is the cell inner membrane. The protein localises to the cytoplasm. It catalyses the reaction ATP + H2O + cellular proteinSide 1 = ADP + phosphate + cellular proteinSide 2.. Part of the Sec protein translocase complex. Interacts with the SecYEG preprotein conducting channel. Has a central role in coupling the hydrolysis of ATP to the transfer of proteins into and across the cell membrane, serving both as a receptor for the preprotein-SecB complex and as an ATP-driven molecular motor driving the stepwise translocation of polypeptide chains across the membrane. The sequence is that of Protein translocase subunit SecA from Klebsiella pneumoniae subsp. pneumoniae (strain ATCC 700721 / MGH 78578).